The following is a 226-amino-acid chain: Enolase-phosphatase E1 (226 aa).

This sequence belongs to the HAD-like hydrolase superfamily. MasA/MtnC family. Monomer. Requires Mg(2+) as cofactor.

The catalysed reaction is 5-methylsulfanyl-2,3-dioxopentyl phosphate + H2O = 1,2-dihydroxy-5-(methylsulfanyl)pent-1-en-3-one + phosphate. It functions in the pathway amino-acid biosynthesis; L-methionine biosynthesis via salvage pathway; L-methionine from S-methyl-5-thio-alpha-D-ribose 1-phosphate: step 3/6. It participates in amino-acid biosynthesis; L-methionine biosynthesis via salvage pathway; L-methionine from S-methyl-5-thio-alpha-D-ribose 1-phosphate: step 4/6. Bifunctional enzyme that catalyzes the enolization of 2,3-diketo-5-methylthiopentyl-1-phosphate (DK-MTP-1-P) into the intermediate 2-hydroxy-3-keto-5-methylthiopentenyl-1-phosphate (HK-MTPenyl-1-P), which is then dephosphorylated to form the acireductone 1,2-dihydroxy-3-keto-5-methylthiopentene (DHK-MTPene). The chain is Enolase-phosphatase E1 from Shewanella amazonensis (strain ATCC BAA-1098 / SB2B).